Reading from the N-terminus, the 301-residue chain is D-alanine--D-alanine ligase A (301 aa).

The 195-residue stretch at 99 to 293 (KRILAFGNVR…FEELLDTIIE (195 aa)) folds into the ATP-grasp domain. 126-181 (IENLGYPVFVKPNNGGSSVATTLVESKEAVKDAVLEALKYDTEVMIEEYIKGDEIT) provides a ligand contact to ATP. Residues Asp-248, Glu-260, and Asn-262 each coordinate Mg(2+).

The protein belongs to the D-alanine--D-alanine ligase family. It depends on Mg(2+) as a cofactor. Mn(2+) serves as cofactor.

The protein resides in the cytoplasm. It catalyses the reaction 2 D-alanine + ATP = D-alanyl-D-alanine + ADP + phosphate + H(+). Its pathway is cell wall biogenesis; peptidoglycan biosynthesis. In terms of biological role, cell wall formation. In Clostridium perfringens (strain 13 / Type A), this protein is D-alanine--D-alanine ligase A.